Reading from the N-terminus, the 171-residue chain is O-acetyl-ADP-ribose deacetylase 2 (171 aa).

Residues 1–171 enclose the Macro domain; that stretch reads MNKITVIQGD…NYDLYLKLLN (171 aa). Residues 10–11, Asn-24, 32–34, and 121–125 contribute to the substrate site; these read DI, GVD, and STGIY. The active-site Proton acceptor is the Asp-34.

This sequence belongs to the MacroD-type family. YmdB subfamily. Homodimer. Interacts with RNase III.

The catalysed reaction is 3''-O-acetyl-ADP-D-ribose + H2O = ADP-D-ribose + acetate + H(+). It carries out the reaction 2''-O-acetyl-ADP-D-ribose + H2O = ADP-D-ribose + acetate + H(+). Functionally, deacetylates O-acetyl-ADP ribose to yield ADP-ribose and free acetate. Down-regulates ribonuclease 3 (RNase III) activity. Acts by interacting directly with the region of the ribonuclease that is required for dimerization/activation. The chain is O-acetyl-ADP-ribose deacetylase 2 from Pantoea vagans (strain C9-1) (Pantoea agglomerans (strain C9-1)).